We begin with the raw amino-acid sequence, 238 residues long: Ribonuclease PH (238 aa).

Residues arginine 86 and glycine 124–arginine 126 contribute to the phosphate site.

It belongs to the RNase PH family. Homohexameric ring arranged as a trimer of dimers.

It carries out the reaction tRNA(n+1) + phosphate = tRNA(n) + a ribonucleoside 5'-diphosphate. Phosphorolytic 3'-5' exoribonuclease that plays an important role in tRNA 3'-end maturation. Removes nucleotide residues following the 3'-CCA terminus of tRNAs; can also add nucleotides to the ends of RNA molecules by using nucleoside diphosphates as substrates, but this may not be physiologically important. Probably plays a role in initiation of 16S rRNA degradation (leading to ribosome degradation) during starvation. This chain is Ribonuclease PH, found in Acinetobacter baylyi (strain ATCC 33305 / BD413 / ADP1).